The chain runs to 149 residues: Calmodulin-6 (149 aa).

EF-hand domains follow at residues Asp8–Asn43, Pro44–Asp79, Asp81–Lys116, and Leu117–Lys149. Residues Asp21, Asp23, Asp25, Cys27, Glu32, Asp57, Asp59, Asn61, Thr63, Glu68, Asp94, Asp96, Asn98, Glu105, Asp130, Asp132, Asp134, Gln136, and Glu141 each coordinate Ca(2+).

Belongs to the calmodulin family. As to quaternary structure, interacts with KCBP.

In terms of biological role, calmodulin mediates the control of a large number of enzymes, ion channels and other proteins by Ca(2+). Among the enzymes to be stimulated by the calmodulin-Ca(2+) complex are a number of protein kinases and phosphatases. In Arabidopsis thaliana (Mouse-ear cress), this protein is Calmodulin-6 (CAM6).